The primary structure comprises 140 residues: Large ribosomal subunit protein bL17 (140 aa).

The span at 119–133 (DPSAKGAADRARLEE) shows a compositional bias: basic and acidic residues. The segment at 119–140 (DPSAKGAADRARLEEEGGMTEE) is disordered.

The protein belongs to the bacterial ribosomal protein bL17 family. As to quaternary structure, part of the 50S ribosomal subunit. Contacts protein L32.

This is Large ribosomal subunit protein bL17 from Maricaulis maris (strain MCS10) (Caulobacter maris).